Reading from the N-terminus, the 323-residue chain is Octaprenyl diphosphate synthase (323 aa).

Lys-45, Arg-48, and His-77 together coordinate isopentenyl diphosphate. Mg(2+) is bound by residues Asp-84 and Asp-88. Arg-93 is a binding site for an all-trans-polyprenyl diphosphate. Arg-94 is an isopentenyl diphosphate binding site. The an all-trans-polyprenyl diphosphate site is built by Lys-170, Thr-171, and Gln-208.

It belongs to the FPP/GGPP synthase family. Requires Mg(2+) as cofactor.

It carries out the reaction 5 isopentenyl diphosphate + (2E,6E)-farnesyl diphosphate = all-trans-octaprenyl diphosphate + 5 diphosphate. Its function is as follows. Supplies octaprenyl diphosphate, the precursor for the side chain of the isoprenoid quinones ubiquinone and menaquinone. The chain is Octaprenyl diphosphate synthase (ispB) from Escherichia coli (strain K12).